Here is a 292-residue protein sequence, read N- to C-terminus: 4-diphosphocytidyl-2-C-methyl-D-erythritol kinase (292 aa).

Residue K20 is part of the active site. 103-113 lines the ATP pocket; sequence PMGGGIGGGSS. Residue D145 is part of the active site.

Belongs to the GHMP kinase family. IspE subfamily.

The enzyme catalyses 4-CDP-2-C-methyl-D-erythritol + ATP = 4-CDP-2-C-methyl-D-erythritol 2-phosphate + ADP + H(+). Its pathway is isoprenoid biosynthesis; isopentenyl diphosphate biosynthesis via DXP pathway; isopentenyl diphosphate from 1-deoxy-D-xylulose 5-phosphate: step 3/6. Functionally, catalyzes the phosphorylation of the position 2 hydroxy group of 4-diphosphocytidyl-2C-methyl-D-erythritol. The sequence is that of 4-diphosphocytidyl-2-C-methyl-D-erythritol kinase from Cupriavidus metallidurans (strain ATCC 43123 / DSM 2839 / NBRC 102507 / CH34) (Ralstonia metallidurans).